Here is a 130-residue protein sequence, read N- to C-terminus: Sec-independent protein translocase protein TatB (130 aa).

Residues 1 to 21 form a helical membrane-spanning segment; sequence MFDIGFTELTLIFIIGLVVLG. Composition is skewed to basic and acidic residues over residues 57–67 and 111–130; these read QDMQERMEKQM and PSDKDSADKNNHDQDSRRHD. Positions 57 to 130 are disordered; that stretch reads QDMQERMEKQ…NHDQDSRRHD (74 aa).

It belongs to the TatB family. The Tat system comprises two distinct complexes: a TatABC complex, containing multiple copies of TatA, TatB and TatC subunits, and a separate TatA complex, containing only TatA subunits. Substrates initially bind to the TatABC complex, which probably triggers association of the separate TatA complex to form the active translocon.

The protein localises to the cell inner membrane. Its function is as follows. Part of the twin-arginine translocation (Tat) system that transports large folded proteins containing a characteristic twin-arginine motif in their signal peptide across membranes. Together with TatC, TatB is part of a receptor directly interacting with Tat signal peptides. TatB may form an oligomeric binding site that transiently accommodates folded Tat precursor proteins before their translocation. The polypeptide is Sec-independent protein translocase protein TatB (Alcanivorax borkumensis (strain ATCC 700651 / DSM 11573 / NCIMB 13689 / SK2)).